A 256-amino-acid chain; its full sequence is Ubiquinone/menaquinone biosynthesis C-methyltransferase UbiE (256 aa).

Residues T79, D100, and 128-129 each bind S-adenosyl-L-methionine; that span reads DA.

It belongs to the class I-like SAM-binding methyltransferase superfamily. MenG/UbiE family.

The enzyme catalyses a 2-demethylmenaquinol + S-adenosyl-L-methionine = a menaquinol + S-adenosyl-L-homocysteine + H(+). The catalysed reaction is a 2-methoxy-6-(all-trans-polyprenyl)benzene-1,4-diol + S-adenosyl-L-methionine = a 5-methoxy-2-methyl-3-(all-trans-polyprenyl)benzene-1,4-diol + S-adenosyl-L-homocysteine + H(+). It participates in quinol/quinone metabolism; menaquinone biosynthesis; menaquinol from 1,4-dihydroxy-2-naphthoate: step 2/2. It functions in the pathway cofactor biosynthesis; ubiquinone biosynthesis. Methyltransferase required for the conversion of demethylmenaquinol (DMKH2) to menaquinol (MKH2) and the conversion of 2-polyprenyl-6-methoxy-1,4-benzoquinol (DDMQH2) to 2-polyprenyl-3-methyl-6-methoxy-1,4-benzoquinol (DMQH2). This chain is Ubiquinone/menaquinone biosynthesis C-methyltransferase UbiE, found in Pseudomonas syringae pv. tomato (strain ATCC BAA-871 / DC3000).